Here is a 312-residue protein sequence, read N- to C-terminus: Methionyl-tRNA formyltransferase (312 aa).

111 to 114 is a (6S)-5,6,7,8-tetrahydrofolate binding site; that stretch reads SLLP.

Belongs to the Fmt family.

It catalyses the reaction L-methionyl-tRNA(fMet) + (6R)-10-formyltetrahydrofolate = N-formyl-L-methionyl-tRNA(fMet) + (6S)-5,6,7,8-tetrahydrofolate + H(+). Attaches a formyl group to the free amino group of methionyl-tRNA(fMet). The formyl group appears to play a dual role in the initiator identity of N-formylmethionyl-tRNA by promoting its recognition by IF2 and preventing the misappropriation of this tRNA by the elongation apparatus. This is Methionyl-tRNA formyltransferase from Rhodopseudomonas palustris (strain HaA2).